A 96-amino-acid chain; its full sequence is Protein Vpr (96 aa).

The tract at residues 1-42 (MEQAPEDQGPQREPYNEWTLELLEELKREAVRHFPRPWLHGL) is homooligomerization. Phosphoserine; by host occurs at positions 79, 94, and 96.

Belongs to the HIV-1 VPR protein family. In terms of assembly, homooligomer, may form homodimer. Interacts with p6-gag region of the Pr55 Gag precursor protein through a (Leu-X-X)4 motif near the C-terminus of the P6gag protein. Interacts with host UNG. May interact with host RAD23A/HHR23A. Interacts with host VPRBP/DCAF1, leading to hijack the CUL4A-RBX1-DDB1-DCAF1/VPRBP complex, mediating ubiquitination of host proteins such as TERT and ZGPAT and arrest of the cell cycle in G2 phase. Post-translationally, phosphorylated on several residues by host. These phosphorylations regulate VPR activity for the nuclear import of the HIV-1 pre-integration complex.

It localises to the virion. Its subcellular location is the host nucleus. It is found in the host extracellular space. During virus replication, may deplete host UNG protein, and incude G2-M cell cycle arrest. Acts by targeting specific host proteins for degradation by the 26S proteasome, through association with the cellular CUL4A-DDB1 E3 ligase complex by direct interaction with host VPRPB/DCAF-1. Cell cycle arrest reportedly occurs within hours of infection and is not blocked by antiviral agents, suggesting that it is initiated by the VPR carried into the virion. Additionally, VPR induces apoptosis in a cell cycle dependent manner suggesting that these two effects are mechanistically linked. Detected in the serum and cerebrospinal fluid of AIDS patient, VPR may also induce cell death to bystander cells. Its function is as follows. During virus entry, plays a role in the transport of the viral pre-integration (PIC) complex to the host nucleus. This function is crucial for viral infection of non-dividing macrophages. May act directly at the nuclear pore complex, by binding nucleoporins phenylalanine-glycine (FG)-repeat regions. This chain is Protein Vpr, found in Human immunodeficiency virus type 1 group M subtype C (isolate 92BR025) (HIV-1).